The chain runs to 386 residues: UDP-N-acetylbacillosamine transaminase (386 aa).

Substrate contacts are provided by residues 25-28, Ala56, and Ser179; that span reads NYIA. Lys184 is subject to N6-(pyridoxal phosphate)lysine. Substrate is bound by residues Asn227 and 325–328; that span reads QIET.

This sequence belongs to the DegT/DnrJ/EryC1 family. It depends on pyridoxal 5'-phosphate as a cofactor.

It catalyses the reaction UDP-N-acetylbacillosamine + 2-oxoglutarate = UDP-2-acetamido-2,6-dideoxy-alpha-D-xylo-hex-4-ulose + L-glutamate. It participates in protein modification; protein glycosylation. Its function is as follows. Aminotransferase involved in the bacillosamine biosynthesis pathway by producing UDP-4-amino-4,6-dideoxy-alpha-D-GlcNAc (UDP-2-acetamido-4-amino-2,4,6-trideoxy-alpha-D-glucopyranose), a precursor used in the production of the glycan component 2,4-diacetamido-2,4,6-trideoxy-alpha-D-glucopyranose. Required for host colonization and virulence. Involved in the N-linked protein glycosylation pathway. The chain is UDP-N-acetylbacillosamine transaminase (pglE) from Campylobacter jejuni subsp. jejuni serotype O:2 (strain ATCC 700819 / NCTC 11168).